Consider the following 369-residue polypeptide: MAPTKDFSTTTTNGAESWDDVADFVTKKGHGVKGLSERGIKTLPKPFHQPLEERFSEKKILERASIPLIDMSQWDSPEVVKSICDAAENWGFFQIVNHGVPLETLERVKEATHRFFGLPAEEKNNYSKENSPINNVRFGSSFVPHVEKALEWKDFLSMFYVSEEETNTYWPPICRDEMLEYMRSSEVLIQRLMEVLVVKGLKVKQIDEIREPMLVGSRRINLNYYPKCPNPELTLGVGRHSDISTFTILLQDQIGGLHVRKLDDTGNTWVHVTPIAGSLIINIGDALQIMSNGRYKSIEHMVVANGTQDRISVPLFVNPKPQAILCPFPEVLANGEKPVYKPVFCSDYSRHFYTKPHDGKKTVDVAMIN.

In terms of domain architecture, Fe2OG dioxygenase spans 209-319; it reads IREPMLVGSR…RISVPLFVNP (111 aa). A 2-oxoglutarate-binding site is contributed by tyrosine 225. Fe cation contacts are provided by histidine 240, aspartate 242, and histidine 300. Arginine 310 and serine 312 together coordinate 2-oxoglutarate.

The protein belongs to the iron/ascorbate-dependent oxidoreductase family. L-ascorbate serves as cofactor. The cofactor is Fe(2+).

It carries out the reaction (E)-4-coumaroyl-CoA + 2-oxoglutarate + O2 = (E)-2,4-dihydroxycinnamoyl-CoA + succinate + CO2. It catalyses the reaction (E)-feruloyl-CoA + 2-oxoglutarate + O2 = (E)-6-hydroxyferuloyl-CoA + succinate + CO2. Its pathway is phenylpropanoid metabolism. Functionally, 2-oxoglutarate (OG)- and Fe(II)-dependent dioxygenase (2OGD) involved in scopoletin and umbelliferone biosynthesis. Converts feruloyl CoA into 6'-hydroxyferuloyl CoA, and p-coumaroyl CoA into 2,4-dihydroxycinnamoyl-CoA. The chain is Bi-functional coumaroyl CoA and feruloyl CoA ortho-hydroxylase Diox1 from Ruta graveolens (Common rue).